Here is a 226-residue protein sequence, read N- to C-terminus: Uracil-DNA glycosylase (226 aa).

Asp-64 acts as the Proton acceptor in catalysis.

This sequence belongs to the uracil-DNA glycosylase (UDG) superfamily. UNG family.

It localises to the cytoplasm. It catalyses the reaction Hydrolyzes single-stranded DNA or mismatched double-stranded DNA and polynucleotides, releasing free uracil.. Its function is as follows. Excises uracil residues from the DNA which can arise as a result of misincorporation of dUMP residues by DNA polymerase or due to deamination of cytosine. In Fusobacterium nucleatum subsp. nucleatum (strain ATCC 25586 / DSM 15643 / BCRC 10681 / CIP 101130 / JCM 8532 / KCTC 2640 / LMG 13131 / VPI 4355), this protein is Uracil-DNA glycosylase.